Here is a 156-residue protein sequence, read N- to C-terminus: ATP synthase subunit b (156 aa).

The chain crosses the membrane as a helical span at residues 7–27 (LFVQAIVFAILVWFTMKFVWP).

It belongs to the ATPase B chain family. F-type ATPases have 2 components, F(1) - the catalytic core - and F(0) - the membrane proton channel. F(1) has five subunits: alpha(3), beta(3), gamma(1), delta(1), epsilon(1). F(0) has three main subunits: a(1), b(2) and c(10-14). The alpha and beta chains form an alternating ring which encloses part of the gamma chain. F(1) is attached to F(0) by a central stalk formed by the gamma and epsilon chains, while a peripheral stalk is formed by the delta and b chains.

Its subcellular location is the cell inner membrane. Functionally, f(1)F(0) ATP synthase produces ATP from ADP in the presence of a proton or sodium gradient. F-type ATPases consist of two structural domains, F(1) containing the extramembraneous catalytic core and F(0) containing the membrane proton channel, linked together by a central stalk and a peripheral stalk. During catalysis, ATP synthesis in the catalytic domain of F(1) is coupled via a rotary mechanism of the central stalk subunits to proton translocation. In terms of biological role, component of the F(0) channel, it forms part of the peripheral stalk, linking F(1) to F(0). In Polaromonas sp. (strain JS666 / ATCC BAA-500), this protein is ATP synthase subunit b.